The following is a 175-amino-acid chain: Alpha-crystallin B chain (175 aa).

Met-1 is modified (N-acetylmethionine). 3 positions are modified to phosphoserine: Ser-19, Ser-45, and Ser-59. Positions 56-164 (RAPSWIDTGL…PERTIPITRE (109 aa)) constitute a sHSP domain. His-83 lines the Zn(2+) pocket. Position 92 is an N6-acetyllysine (Lys-92). His-104, Glu-106, His-111, and His-119 together coordinate Zn(2+). The disordered stretch occupies residues 142 to 175 (VLTVNGPRKQASGPERTIPITREEKPAVTAAPKK). Lys-166 is subject to N6-acetyllysine. An O-linked (GlcNAc) threonine glycan is attached at Thr-170.

Belongs to the small heat shock protein (HSP20) family. Heteromer composed of three CRYAA and one CRYAB subunits. Aggregates with homologous proteins, including the small heat shock protein HSPB1, to form large heteromeric complexes. Inter-subunit bridging via zinc ions enhances stability, which is crucial as there is no protein turn over in the lens. Interacts with HSPBAP1. Interacts with TTN/titin. Interacts with TMEM109; in the cellular response to DNA damage. Interacts with DES; binds rapidly during early stages of DES filament assembly and a reduced binding seen in the later stages. Interacts with TMED10; the interaction mediates the translocation from the cytoplasm into the ERGIC (endoplasmic reticulum-Golgi intermediate compartment) and thereby secretion. Interacts with ATP6V1A and with MTOR, forming a ternary complex. Lens as well as other tissues.

The protein localises to the cytoplasm. It is found in the nucleus. Its subcellular location is the secreted. The protein resides in the lysosome. May contribute to the transparency and refractive index of the lens. Has chaperone-like activity, preventing aggregation of various proteins under a wide range of stress conditions. In lens epithelial cells, stabilizes the ATP6V1A protein, preventing its degradation by the proteasome. The polypeptide is Alpha-crystallin B chain (Rattus norvegicus (Rat)).